We begin with the raw amino-acid sequence, 476 residues long: Sulfate adenylyltransferase subunit 1 (476 aa).

The region spanning 24–228 (KSLLRFLTCG…MAWYQGPTLL (205 aa)) is the tr-type G domain. Residues 33–40 (GSVDDGKS) are G1. 33-40 (GSVDDGKS) provides a ligand contact to GTP. Residues 91-95 (GITID) form a G2 region. The G3 stretch occupies residues 112 to 115 (DTPG). Residues 112 to 116 (DTPGH) and 167 to 170 (NKMD) contribute to the GTP site. The interval 167 to 170 (NKMD) is G4. The segment at 205–207 (SAL) is G5.

The protein belongs to the TRAFAC class translation factor GTPase superfamily. Classic translation factor GTPase family. CysN/NodQ subfamily. As to quaternary structure, heterodimer composed of CysD, the smaller subunit, and CysN.

It carries out the reaction sulfate + ATP + H(+) = adenosine 5'-phosphosulfate + diphosphate. It participates in sulfur metabolism; hydrogen sulfide biosynthesis; sulfite from sulfate: step 1/3. In terms of biological role, with CysD forms the ATP sulfurylase (ATPS) that catalyzes the adenylation of sulfate producing adenosine 5'-phosphosulfate (APS) and diphosphate, the first enzymatic step in sulfur assimilation pathway. APS synthesis involves the formation of a high-energy phosphoric-sulfuric acid anhydride bond driven by GTP hydrolysis by CysN coupled to ATP hydrolysis by CysD. In Vibrio vulnificus (strain CMCP6), this protein is Sulfate adenylyltransferase subunit 1.